A 1358-amino-acid polypeptide reads, in one-letter code: Phosphoinositide 3-kinase regulatory subunit 4 (1358 aa).

Gly-2 is lipidated: N-myristoyl glycine. One can recognise a Protein kinase domain in the interval Phe-26 to Leu-324. ATP contacts are provided by residues Leu-32–Val-40 and Lys-53. The active-site Proton acceptor is the Asp-148. HEAT repeat units lie at residues Asn-373–Val-411, Ile-413–Glu-450, Ile-458–Arg-495, Gln-531–Arg-570, Lys-572–Trp-610, Ser-612–Leu-648, and Asp-690–Arg-726. A phosphoserine mark is found at Ser-808, Ser-813, Ser-853, and Ser-865. The tract at residues Leu-875–Cys-899 is disordered. WD repeat units follow at residues Glu-991–Thr-1030, Arg-1040–Ser-1079, Lys-1093–Thr-1134, Leu-1139–Ser-1178, Pro-1182–Thr-1223, and Pro-1237–Val-1278. Positions Lys-1307 to Val-1326 are disordered. Residues Asp-1315–Val-1326 are compositionally biased toward basic and acidic residues. Position 1316 is a phosphothreonine (Thr-1316). A WD 7 repeat occupies Gly-1327–Lys-1358.

The protein belongs to the protein kinase superfamily. Ser/Thr protein kinase family. As to quaternary structure, component of the PI3K (PI3KC3/PI3K-III/class III phosphatidylinositol 3-kinase) complex the core of which is composed of the catalytic subunit PIK3C3, the regulatory subunit PIK3R4 and BECN1 associating with additional regulatory/auxiliary subunits to form alternative complex forms. Alternative complex forms containing a fourth regulatory subunit in a mutually exclusive manner are PI3K complex I (PI3KC3-C1) containing ATG14, and PI3K complex II (PI3KC3-C2) containing UVRAG. PI3KC3-C1 displays a V-shaped architecture with PIK3R4 serving as a bridge between PIK3C3 and the ATG14:BECN1 subcomplex. Both, PI3KC3-C1 and PI3KC3-C2, can associate with further regulatory subunits, such as RUBCN, SH3GLB1/Bif-1, AMBRA1 and NRBF2. PI3KC3-C1 probably associates with PIK3CB. Interacts with RAB7A in the presence of PIK3C3/VPS34. Interacts with NRBF2. Interacts with ARMC3. It depends on Mn(2+) as a cofactor. In terms of processing, myristoylated. Post-translationally, probably autophosphorylated.

It localises to the late endosome. Its subcellular location is the cytoplasmic vesicle. The protein resides in the autophagosome. The protein localises to the membrane. It carries out the reaction L-seryl-[protein] + ATP = O-phospho-L-seryl-[protein] + ADP + H(+). It catalyses the reaction L-threonyl-[protein] + ATP = O-phospho-L-threonyl-[protein] + ADP + H(+). Functionally, regulatory subunit of the PI3K complex that mediates formation of phosphatidylinositol 3-phosphate; different complex forms are believed to play a role in multiple membrane trafficking pathways: PI3KC3-C1 is involved in initiation of autophagosomes and PI3KC3-C2 in maturation of autophagosomes and endocytosis. Involved in regulation of degradative endocytic trafficking and cytokinesis, probably in the context of PI3KC3-C2. Its function is as follows. Regulatory subunit of the PI3K complex. May regulate membrane trafficking late in the endocytic pathway. The chain is Phosphoinositide 3-kinase regulatory subunit 4 (PIK3R4) from Pongo abelii (Sumatran orangutan).